The sequence spans 256 residues: Pyridoxine 5'-phosphate synthase (256 aa).

Residues N8 and R19 each contribute to the 3-amino-2-oxopropyl phosphate site. H44 (proton acceptor) is an active-site residue. 1-deoxy-D-xylulose 5-phosphate-binding residues include R46 and H51. The active-site Proton acceptor is E74. Residue T111 participates in 1-deoxy-D-xylulose 5-phosphate binding. Residue H202 is the Proton donor of the active site. Residues D203 and G225–H226 each bind 3-amino-2-oxopropyl phosphate.

Belongs to the PNP synthase family. As to quaternary structure, homooctamer; tetramer of dimers.

It is found in the cytoplasm. The catalysed reaction is 3-amino-2-oxopropyl phosphate + 1-deoxy-D-xylulose 5-phosphate = pyridoxine 5'-phosphate + phosphate + 2 H2O + H(+). Its pathway is cofactor biosynthesis; pyridoxine 5'-phosphate biosynthesis; pyridoxine 5'-phosphate from D-erythrose 4-phosphate: step 5/5. In terms of biological role, catalyzes the complicated ring closure reaction between the two acyclic compounds 1-deoxy-D-xylulose-5-phosphate (DXP) and 3-amino-2-oxopropyl phosphate (1-amino-acetone-3-phosphate or AAP) to form pyridoxine 5'-phosphate (PNP) and inorganic phosphate. The polypeptide is Pyridoxine 5'-phosphate synthase (Xanthomonas campestris pv. campestris (strain 8004)).